A 517-amino-acid chain; its full sequence is 2-isopropylmalate synthase (517 aa).

The Pyruvate carboxyltransferase domain occupies 5–267; that stretch reads VIIFDTTLRD…HTNVRCQEIY (263 aa). Residues D14, H202, H204, and N238 each coordinate Mn(2+). A regulatory domain region spans residues 392 to 517; sequence RLKCFHVDSS…QRKYIKKNNN (126 aa).

This sequence belongs to the alpha-IPM synthase/homocitrate synthase family. LeuA type 1 subfamily. As to quaternary structure, homodimer. It depends on Mn(2+) as a cofactor.

The protein resides in the cytoplasm. It carries out the reaction 3-methyl-2-oxobutanoate + acetyl-CoA + H2O = (2S)-2-isopropylmalate + CoA + H(+). It participates in amino-acid biosynthesis; L-leucine biosynthesis; L-leucine from 3-methyl-2-oxobutanoate: step 1/4. Its function is as follows. Catalyzes the condensation of the acetyl group of acetyl-CoA with 3-methyl-2-oxobutanoate (2-ketoisovalerate) to form 3-carboxy-3-hydroxy-4-methylpentanoate (2-isopropylmalate). The polypeptide is 2-isopropylmalate synthase (Blochmanniella pennsylvanica (strain BPEN)).